The following is a 376-amino-acid chain: Fibromodulin (376 aa).

Residues 1 to 18 (MQWASVLLLAGLCSLSQG) form the signal peptide. Glutamine 19 bears the Pyrrolidone carboxylic acid mark. Tyrosine 20, tyrosine 38, tyrosine 53, tyrosine 55, tyrosine 63, and tyrosine 65 each carry sulfotyrosine. One can recognise an LRRNT domain in the interval 67–105 (APPPPEPRDCPQECDCPPNFPTAMYCDNRNLKYLPFVPS). LRR repeat units lie at residues 106–127 (RMKY…VFDN), 130–151 (GLLW…RKVF), 156–176 (HLER…PLPR), 177–198 (SLRE…ALEG), 201–222 (NLTA…MRGL), 224–245 (SLIL…LPSA), 246–266 (LEQL…YFRG), and 269–289 (KLLY…ATNT). An N-linked (GlcNAc...) (keratan sulfate) asparagine glycan is attached at asparagine 127. Residue asparagine 166 is glycosylated (N-linked (GlcNAc...) (keratan sulfate) asparagine). Residue asparagine 201 is glycosylated (N-linked (GlcNAc...) (keratan sulfate) asparagine). An N-linked (GlcNAc...) (keratan sulfate) asparagine glycan is attached at asparagine 291. LRR repeat units lie at residues 294 to 315 (SLLE…NTNL) and 316 to 335 (ENLY…SFCT). A disulfide bond links cysteine 334 and cysteine 367. Residue asparagine 341 is glycosylated (N-linked (GlcNAc...) asparagine). One copy of the LRR 11 repeat lies at 344-367 (KLQVLRLDGNEIKRSAMPVDAPLC).

Belongs to the small leucine-rich proteoglycan (SLRP) family. SLRP class II subfamily. As to quaternary structure, binds to type I and type II collagen. Binds keratan sulfate chains. Post-translationally, sulfated on tyrosine residue(s). As to expression, highest levels observed in knee epiphysis, in calvarial and diaphyseal bone, in nasal and costal cartilage, in the eye, and in bladder. In mature knee joint it is mostly present in the proliferating zone of growth plate. It is also observed in ligaments, especially at insertion sites, in the junction between meniscus and joint capsule, in the perimysium of skeletal muscle and in the periosteum.

It is found in the secreted. The protein localises to the extracellular space. It localises to the extracellular matrix. Affects the rate of fibrils formation. May have a primary role in collagen fibrillogenesis. In Mus musculus (Mouse), this protein is Fibromodulin (Fmod).